Reading from the N-terminus, the 109-residue chain is Acylphosphatase (109 aa).

Residues 22 to 109 (RLRARVEGVV…GEFSSFDVVY (88 aa)) enclose the Acylphosphatase-like domain. Catalysis depends on residues arginine 37 and asparagine 55.

This sequence belongs to the acylphosphatase family.

It carries out the reaction an acyl phosphate + H2O = a carboxylate + phosphate + H(+). The polypeptide is Acylphosphatase (acyP) (Arthrobacter sp. (strain FB24)).